Consider the following 439-residue polypeptide: ATP-dependent RNA helicase RhlB (439 aa).

The Q motif signature appears at 9-37 (QKFADLPLHPEVKQALAENGFEFCTPIQA). One can recognise a Helicase ATP-binding domain in the interval 40–219 (LPVLLQSKDI…YDHMNDPVKV (180 aa)). 53–60 (AQTGTGKT) provides a ligand contact to ATP. The DEAD box motif lies at 165–168 (DEAD). A Helicase C-terminal domain is found at 243–390 (KMRLLLTLIE…VSNYDRDALL (148 aa)). A disordered region spans residues 395-439 (SPVKIHRKHPAGARNLRERSGAGRTPGAHRSGGRPPRHDRTRRQP). The span at 425–439 (SGGRPPRHDRTRRQP) shows a compositional bias: basic residues.

Belongs to the DEAD box helicase family. RhlB subfamily. In terms of assembly, component of the RNA degradosome, which is a multiprotein complex involved in RNA processing and mRNA degradation.

Its subcellular location is the cytoplasm. It carries out the reaction ATP + H2O = ADP + phosphate + H(+). Functionally, DEAD-box RNA helicase involved in RNA degradation. Has RNA-dependent ATPase activity and unwinds double-stranded RNA. This is ATP-dependent RNA helicase RhlB from Shewanella oneidensis (strain ATCC 700550 / JCM 31522 / CIP 106686 / LMG 19005 / NCIMB 14063 / MR-1).